A 111-amino-acid polypeptide reads, in one-letter code: Integration host factor subunit alpha (111 aa).

Belongs to the bacterial histone-like protein family. In terms of assembly, heterodimer of an alpha and a beta chain.

This protein is one of the two subunits of integration host factor, a specific DNA-binding protein that functions in genetic recombination as well as in transcriptional and translational control. The polypeptide is Integration host factor subunit alpha (Polaromonas sp. (strain JS666 / ATCC BAA-500)).